We begin with the raw amino-acid sequence, 1215 residues long: Kinesin-like protein KIN-7I (1215 aa).

In terms of domain architecture, Kinesin motor spans 3 to 327 (RIHVAVRARP…LQFASRALRV (325 aa)). An ATP-binding site is contributed by 79–86 (GQTNSGKT). Coiled coils occupy residues 333–414 (VNEI…IENL), 571–646 (ESEA…AAYE), 708–855 (IRDY…KRDS), and 894–979 (DMEA…KEDM).

It belongs to the TRAFAC class myosin-kinesin ATPase superfamily. Kinesin family. KIN-7 subfamily.

This chain is Kinesin-like protein KIN-7I, found in Oryza sativa subsp. japonica (Rice).